The following is a 191-amino-acid chain: Fe/S biogenesis protein NfuA (191 aa).

2 residues coordinate [4Fe-4S] cluster: C149 and C152.

It belongs to the NfuA family. In terms of assembly, homodimer. [4Fe-4S] cluster is required as a cofactor.

Functionally, involved in iron-sulfur cluster biogenesis. Binds a 4Fe-4S cluster, can transfer this cluster to apoproteins, and thereby intervenes in the maturation of Fe/S proteins. Could also act as a scaffold/chaperone for damaged Fe/S proteins. This is Fe/S biogenesis protein NfuA from Cronobacter sakazakii (strain ATCC BAA-894) (Enterobacter sakazakii).